Here is a 377-residue protein sequence, read N- to C-terminus: MSNGIVIIGSGFAARQLVKNIRKQDATIPLTLIAADSMDEYNKPDLSHVISQGQRADDLTRQTAGEFAEQFNLHLFPQTWVTDIDAEARVVKSQNNQWQYDKLVLATGASAFVPPVPGRELMLTLNSQQEYRACETQLRDARRVLIVGGGLIGSELAMDFCRAGKAVTLIDNAASILASLMPPEVSSRLQHRLTEMGVYLLLKSQLQGLEKTDSGILATLDHQRSIEVDAVIAATGLRPETALARRAGLTINRGVCVDSYLQTSNDDIYALGDYAEINGQVLPFLQPIQLSAMVLAKNLLGNNTPLKLPTMLVKIKTPELPLHLAGETQRQDLRWQINTERQGMVARGVDDADQLRAFVVSEDRMKEAFGLLKTLPM.

Belongs to the FAD-dependent oxidoreductase family. FAD serves as cofactor.

It localises to the cytoplasm. It carries out the reaction 2 reduced [nitric oxide reductase rubredoxin domain] + NAD(+) + H(+) = 2 oxidized [nitric oxide reductase rubredoxin domain] + NADH. Its pathway is nitrogen metabolism; nitric oxide reduction. Functionally, one of at least two accessory proteins for anaerobic nitric oxide (NO) reductase. Reduces the rubredoxin moiety of NO reductase. The protein is Nitric oxide reductase FlRd-NAD(+) reductase (norW) of Shigella boydii serotype 4 (strain Sb227).